A 120-amino-acid chain; its full sequence is SFAGAEAANASQLQSIARQVRGAVNAVAGQVTGNGGSGNSGTSAAAANPNSDNTASIADRGTSAIMTTASATASSTGVDGGIAATYAVASQWDGGYVANYTITQFGRDFDDRLAVAIHFA.

The segment at 29-59 (GQVTGNGGSGNSGTSAAAANPNSDNTASIAD) is disordered. The span at 40 to 51 (SGTSAAAANPNS) shows a compositional bias: low complexity.

The protein belongs to the mycobacterial PE family. Forms a complex with PE9. The complex interacts with human TLR4.

It localises to the secreted. Its subcellular location is the cell wall. Its function is as follows. Together with PE9, induces macrophage apoptosis through human Toll-like receptor 4 (TLR4) signaling pathway. Interaction with TLR4 leads to increased levels of phospho-IRF-3, increase in the transcript levels of IFN-beta and pro-apoptotic genes, up-regulation of IL-10, down-regulation of IL-1b and enhanced levels of macrophage apoptosis. This Mycobacterium tuberculosis (strain ATCC 25618 / H37Rv) protein is PE family protein PE10.